The chain runs to 1637 residues: Stress response protein NST1 (1637 aa).

The segment covering 1 to 17 has biased composition (polar residues); that stretch reads MSNRGNLNLNLPPSSGK. Disordered stretches follow at residues 1–155, 221–252, 442–494, 504–523, 681–734, 746–825, 871–1036, 1049–1075, 1176–1299, and 1512–1534; these read MSNR…EITN, HQASNNNHIHNHSHTSSHPLQHTPNHLHHASH, LKMN…SQQL, KNNLQQNHHTHHHHQQPLQH, KTPY…EIDD, QHHH…EEEK, AKRE…SKHV, SKQNQAQNGNQSHLPPQSRLRQDEENP, NSSQ…GAII, and YTQQQQQQQQPQPQPQSQQQYPL. Positions 24 to 33 are enriched in basic and acidic residues; the sequence is VHFELSKEKN. Composition is skewed to low complexity over residues 34–53 and 64–113; these read NSTNSNPHTSSTSTSNSNNT and NDNN…QQQS. Over residues 124 to 134 the composition is skewed to basic residues; it reads AKKRKKKKSKK. Residues 135-155 are compositionally biased toward low complexity; the sequence is SSNNNGNNSNTNSNSNSEITN. Residues 446-470 are compositionally biased toward low complexity; it reads QRQQSQSQSQSQSQQQRDVQTAQSQ. Polar residues predominate over residues 471–487; it reads VLSKDSSLKNANTSMNK. Residues 692-706 show a composition bias toward polar residues; the sequence is PAATSQDREQQVQPN. The span at 717 to 734 shows a compositional bias: basic and acidic residues; that stretch reads DHEHEHEHEHEHEHEIDD. The span at 754-808 shows a compositional bias: acidic residues; it reads EEYDEEDEEDDEEYEYGDDEEEEDEEDEEEGEDEELEEVVEDDVDEEILDDEEEF. A coiled-coil region spans residues 855 to 1023; that stretch reads KDNTRKLFEE…KQLEKEAAVS (169 aa). Composition is skewed to basic and acidic residues over residues 871–887 and 896–1021; these read AKREKEAKKLKQKEKAK and AKEE…KEAA. Residues 1049 to 1063 are compositionally biased toward polar residues; that stretch reads SKQNQAQNGNQSHLP. Low complexity predominate over residues 1176-1199; sequence NSSQGSPWTTNSTLSSNLGSTGLS. Polar residues predominate over residues 1201 to 1228; the sequence is GQGQTVSGVNTNLPSSIGITSGGASQIF. Positions 1234-1257 are enriched in low complexity; that stretch reads PQLQPHQPQQQQQQQQQQQQQQQQ. Residues 1258-1267 show a composition bias toward polar residues; the sequence is NYFSPFNSFS. Composition is skewed to low complexity over residues 1282–1299 and 1514–1534; these read TTNINNSTTASSSTGAII and QQQQQQQQPQPQPQSQQQYPL.

The protein belongs to the NST1 family.

Its subcellular location is the cytoplasm. In terms of biological role, may act as a negative regulator of salt tolerance. In Lodderomyces elongisporus (strain ATCC 11503 / CBS 2605 / JCM 1781 / NBRC 1676 / NRRL YB-4239) (Yeast), this protein is Stress response protein NST1 (NST1).